We begin with the raw amino-acid sequence, 395 residues long: Fractalkine (395 aa).

Positions 1–24 (MAPSPLAWLLRLAAFFHLCTLLPG) are cleaved as a signal peptide. Residues 25–100 (QHLGMTKCEI…HQAAALTKNG (76 aa)) are chemokine and involved in interaction with ITGAV:ITGB3 and ITGA4:ITGB1. The Extracellular portion of the chain corresponds to 25–336 (QHLGMTKCEI…TPVPDTQAAT (312 aa)). Cystine bridges form between Cys32–Cys58 and Cys36–Cys74. The mucin-like stalk stretch occupies residues 101–336 (GKFEKRVDNV…TPVPDTQAAT (236 aa)). Composition is skewed to polar residues over residues 148 to 172 (ARGT…TSEA) and 201 to 210 (AVYQSGSSSW). 2 disordered regions span residues 148–180 (ARGT…LTAK) and 201–305 (AVYQ…SGSQ). Residues 218-236 (SPSTTAPSPQVSTTSPSTP) show a composition bias toward low complexity. A helical transmembrane segment spans residues 337–357 (RRQAVGLLAFLGLLFCLGVAM). The Cytoplasmic portion of the chain corresponds to 358–395 (FAYQSLQGCPRKMAGEMVEGLRYVPRSCGSNSYVLVPV).

Belongs to the intercrine delta family. In terms of assembly, monomer. Forms a ternary complex with CX3CR1 and ITGAV:ITGB3 or ITGA4:ITGB1. A soluble short 80 kDa form may be released by proteolytic cleavage from the long membrane-anchored form. In terms of tissue distribution, highest levels in brain. Lower levels in kidney, heart and lung. Also found in skeletal muscle and testis. Highly expressed in lesional smooth muscle cells, but not macrophages. Low levels of ABCD-3 mRNA were also found in anti-CD40-stimulated splenic B-cells, but not in resting B-cells. Also expressed in dendritic cells.

It localises to the cell membrane. Its subcellular location is the secreted. Chemokine that acts as a ligand for both CX3CR1 and integrins ITGAV:ITGB3 and ITGA4:ITGB1. The CX3CR1-CX3CL1 signaling exerts distinct functions in different tissue compartments, such as immune response, inflammation, cell adhesion and chemotaxis. Regulates leukocyte adhesion and migration processes at the endothelium. Can activate integrins in both a CX3CR1-dependent and CX3CR1-independent manner. In the presence of CX3CR1, activates integrins by binding to the classical ligand-binding site (site 1) in integrins. In the absence of CX3CR1, binds to a second site (site 2) in integrins which is distinct from site 1 and enhances the binding of other integrin ligands to site 1. Functionally, the soluble form is chemotactic for T-cells and monocytes, but not for neutrophils. In terms of biological role, the membrane-bound form promotes adhesion of those leukocytes to endothelial cells. This chain is Fractalkine, found in Mus musculus (Mouse).